A 115-amino-acid polypeptide reads, in one-letter code: MTKTKPAPHRVKMHVKKGDTIQVISGKDKGKVGEVLRTIPSHSQVVVKGVNIRTKHVKPRQEGESGQISSYEAPIHSSKVMLYSTKEKIASRICYTVTDDGRKVRMLKKTGEIID.

The protein belongs to the universal ribosomal protein uL24 family. As to quaternary structure, part of the 50S ribosomal subunit.

In terms of biological role, one of two assembly initiator proteins, it binds directly to the 5'-end of the 23S rRNA, where it nucleates assembly of the 50S subunit. Functionally, one of the proteins that surrounds the polypeptide exit tunnel on the outside of the subunit. The protein is Large ribosomal subunit protein uL24 of Synechocystis sp. (strain ATCC 27184 / PCC 6803 / Kazusa).